The sequence spans 800 residues: Phenylalanine--tRNA ligase beta subunit (800 aa).

Residues 39–154 (TKDIKKLVVG…EAVKPGTDAL (116 aa)) form the tRNA-binding domain. Positions 408 to 483 (SFVTPIKITA…RIYGYDDIPS (76 aa)) constitute a B5 domain. Residues Asp-461, Asp-467, Glu-470, and Glu-471 each coordinate Mg(2+). One can recognise an FDX-ACB domain in the interval 708–800 (PRFPGVTRDI…ALKKHGAIIR (93 aa)).

This sequence belongs to the phenylalanyl-tRNA synthetase beta subunit family. Type 1 subfamily. As to quaternary structure, tetramer of two alpha and two beta subunits. Mg(2+) serves as cofactor.

Its subcellular location is the cytoplasm. The catalysed reaction is tRNA(Phe) + L-phenylalanine + ATP = L-phenylalanyl-tRNA(Phe) + AMP + diphosphate + H(+). In Staphylococcus epidermidis (strain ATCC 35984 / DSM 28319 / BCRC 17069 / CCUG 31568 / BM 3577 / RP62A), this protein is Phenylalanine--tRNA ligase beta subunit.